The chain runs to 200 residues: Protein C2-DOMAIN ABA-RELATED 5 (200 aa).

The 121-residue stretch at V22–S142 folds into the C2 domain. R57, D58, D63, D109, Y110, D111, and D117 together coordinate Ca(2+).

This sequence belongs to the plant CAR protein family. As to quaternary structure, binds to PYR/PYL/RCAR abscisic acid intracellular receptors in an ABA-independent manner, both at the plasma membrane and in the nucleus.

It localises to the cell membrane. The protein resides in the nucleus. Its function is as follows. Stimulates the GTPase/ATPase activities of Obg-like ATPases. Mediates the transient calcium-dependent interaction of PYR/PYL/RCAR abscisic acid (ABA) receptors with the plasma membrane and thus regulates ABA sensitivity. The chain is Protein C2-DOMAIN ABA-RELATED 5 from Arabidopsis thaliana (Mouse-ear cress).